A 900-amino-acid chain; its full sequence is Trehalose-phosphatase (900 aa).

Disordered regions lie at residues 76–109 (SRLF…EEDP) and 874–900 (VKHS…SYKN). Residues 82 to 108 (KNRDKSENGEKGENDLHAKEEREKEED) are compositionally biased toward basic and acidic residues.

The protein in the C-terminal section; belongs to the trehalose phosphatase family. In the N-terminal section; belongs to the glycosyltransferase 20 family. Mg(2+) is required as a cofactor.

It carries out the reaction alpha,alpha-trehalose 6-phosphate + H2O = alpha,alpha-trehalose + phosphate. It participates in carbohydrate biosynthesis. In terms of biological role, phosphatase catalytic subunit of the trehalose synthase complex that catalyzes the production of trehalose from glucose-6-phosphate and UDP-alpha-D-glucose in a two step process. This is Trehalose-phosphatase from Zygosaccharomyces rouxii.